The following is a 418-amino-acid chain: Tyrosine--tRNA ligase (418 aa).

Tyr38 is a binding site for L-tyrosine. The 'HIGH' region motif lies at Cys43–Ser52. Tyr175 and Gln179 together coordinate L-tyrosine. Positions Lys235–Thr239 match the 'KMSKS' region motif. Lys238 serves as a coordination point for ATP. Residues Leu348–Val413 enclose the S4 RNA-binding domain.

This sequence belongs to the class-I aminoacyl-tRNA synthetase family. TyrS type 1 subfamily. In terms of assembly, homodimer.

Its subcellular location is the cytoplasm. The catalysed reaction is tRNA(Tyr) + L-tyrosine + ATP = L-tyrosyl-tRNA(Tyr) + AMP + diphosphate + H(+). Functionally, catalyzes the attachment of tyrosine to tRNA(Tyr) in a two-step reaction: tyrosine is first activated by ATP to form Tyr-AMP and then transferred to the acceptor end of tRNA(Tyr). This is Tyrosine--tRNA ligase from Ehrlichia ruminantium (strain Welgevonden).